The following is a 210-amino-acid chain: MDLRKHLGLLTLLLVAVFAFYGRPADACSCMPSHPQTHFAQADYVVQLRVLRKSDTIEPGRTTYKVHIKRTYKATSEARRMLRDGRLSTPQDDAMCGINLDLGKVYIVAGRMPTLNICSYYKEYTRMTITERHGFSGGYAKATNCTVTPCFGERCFKGRNYADTCKWSPFGKCETNYSACMPHKVQTVNGVISRCRWRRTQLYRKCMSNP.

Residues 1–27 (MDLRKHLGLLTLLLVAVFAFYGRPADA) form the signal peptide. Residue Cys-28 coordinates Zn(2+). 2 involved in metalloproteinase-binding regions span residues 28–31 (CSCM) and 93–94 (DA). Intrachain disulfides connect Cys-28–Cys-96, Cys-30–Cys-118, Cys-145–Cys-195, Cys-150–Cys-155, and Cys-165–Cys-180. The NTR domain maps to 28 to 145 (CSCMPSHPQT…SGGYAKATNC (118 aa)).

This sequence belongs to the protease inhibitor I35 (TIMP) family. In terms of tissue distribution, expressed in heads of female and male adult flies. Expressed at the time of eclosion in unopened wings of adult flies. Strongly expressed at the tip of ovarian germarium region 1 where germline stem cells (GSCs) and cystoblasts reside and in region 2 of the germarium.

It localises to the secreted. In terms of biological role, metalloproteinase inhibitor that acts on both matrix metalloproteinases Mmp1 and Mmp2 in vitro. Complexes with metalloproteinases and irreversibly inactivates them by binding to their catalytic zinc cofactor. Required for wing maturation which is the final step in morphogenesis of the adult fly. Involved in the negative regulation of developmental tissue invasion for imaginal disk eversion during metamorphosis by inhibiting Mmp-mediated basement membrane (BM) degradation. Required for oogenesis and for the long-term maintainance of germarial structure and shape in the adult ovaries. Required for maintaining composition and biophysical properties of the extracellular matrix (ECM), and for the normal organization and cyst production of the germline stem cell (GSC) niche. The polypeptide is Tissue inhibitor of metalloproteinase (Drosophila melanogaster (Fruit fly)).